The primary structure comprises 326 residues: ELAV-like protein 1 (326 aa).

N-acetylserine is present on serine 2. A Phosphoserine modification is found at serine 2. Residues 20 to 98 (TNLIVNYLPQ…KTIKVSYARP (79 aa)) enclose the RRM 1 domain. A phosphoserine mark is found at serine 100 and serine 158. Positions 106–186 (ANLYISGLPR…EPITVKFAAN (81 aa)) constitute an RRM 2 domain. A Glycyl lysine isopeptide (Lys-Gly) (interchain with G-Cter in SUMO2) cross-link involves residue lysine 191. Serine 197 and serine 202 each carry phosphoserine. At arginine 206 the chain carries Omega-N-methylarginine. At arginine 217 the chain carries Asymmetric dimethylarginine; by CARM1; alternate. The residue at position 217 (arginine 217) is an Omega-N-methylarginine; alternate. A phosphoserine mark is found at serine 221 and serine 318. The RRM 3 domain maps to 244 to 322 (WCIFIYNLGQ…KILQVSFKTN (79 aa)).

The protein belongs to the RRM elav family. As to quaternary structure, monomer and homodimer (in vitro). Interacts with ANP32A. Interacts with ZNF385A; the interaction is indirect and mRNA-dependent and may regulate p53/TP53 expression. Identified in a mRNP complex, at least composed of DHX9, DDX3X, ELAVL1, HNRNPU, IGF2BP1, ILF3, PABPC1, PCBP2, PTBP2, STAU1, STAU2, SYNCRIP and YBX1. Interacts with AGO1 and AGO2. Interacts with IGF2BP1. Interacts with IGF2BP2 and IGF2BP3. Interacts with HNRNPL. Interacts with DHX36; this interaction occurs in a RNA-dependent manner. Interacts with ILF3; this interaction occurs in a RNA-dependent manner. Interacts with PLEKHN1. Interacts with SHFL; the interaction increases in presence of RNA. Interacts with YBX1; interaction recruits ELAVL1 on C5-methylcytosine (m5C)-containing mRNAs, thereby promoting mRNA stability. Interacts with FXR1. Phosphorylated by MAPKAPK2. Phosphorylated by PRKCD. Post-translationally, methylated at Arg-217 by CARM1 in T-cells in response to LPS challenge.

It is found in the cytoplasm. The protein resides in the nucleus. The protein localises to the stress granule. Its subcellular location is the P-body. Its function is as follows. RNA-binding protein that binds to the 3'-UTR region of mRNAs and increases their stability. Involved in embryonic stem cell (ESC) differentiation: preferentially binds mRNAs that are not methylated by N6-methyladenosine (m6A), stabilizing them, promoting ESC differentiation. Has also been shown to be capable of binding to m6A-containing mRNAs and contributes to MYC stability by binding to m6A-containing MYC mRNAs. Binds to poly-U elements and AU-rich elements (AREs) in the 3'-UTR of target mRNAs. Binds avidly to the AU-rich element in FOS and IL3/interleukin-3 mRNAs. In the case of the FOS AU-rich element, binds to a core element of 27 nucleotides that contain AUUUA, AUUUUA, and AUUUUUA motifs. Binds preferentially to the 5'-UUUU[AG]UUU-3' motif in vitro. With ZNF385A, binds the 3'-UTR of p53/TP53 mRNA to control their nuclear export induced by CDKN2A. Hence, may regulate p53/TP53 expression and mediate in part the CDKN2A anti-proliferative activity. May also bind with ZNF385A the CCNB1 mRNA. Increases the stability of the leptin mRNA harboring an AU-rich element (ARE) in its 3' UTR. This chain is ELAV-like protein 1 (Elavl1), found in Mus musculus (Mouse).